The sequence spans 359 residues: Glycerol-3-phosphate dehydrogenase [NAD(P)+] (359 aa).

Threonine 11, tryptophan 12, arginine 32, and lysine 107 together coordinate NADPH. Sn-glycerol 3-phosphate-binding residues include lysine 107 and glycine 138. Alanine 142 serves as a coordination point for NADPH. The sn-glycerol 3-phosphate site is built by lysine 193, aspartate 246, serine 256, arginine 257, and asparagine 258. Residue lysine 193 is the Proton acceptor of the active site. NADPH is bound at residue arginine 257. NADPH-binding residues include valine 281 and glutamate 283.

The protein belongs to the NAD-dependent glycerol-3-phosphate dehydrogenase family.

Its subcellular location is the cytoplasm. It catalyses the reaction sn-glycerol 3-phosphate + NAD(+) = dihydroxyacetone phosphate + NADH + H(+). The enzyme catalyses sn-glycerol 3-phosphate + NADP(+) = dihydroxyacetone phosphate + NADPH + H(+). Its pathway is membrane lipid metabolism; glycerophospholipid metabolism. In terms of biological role, catalyzes the reduction of the glycolytic intermediate dihydroxyacetone phosphate (DHAP) to sn-glycerol 3-phosphate (G3P), the key precursor for phospholipid synthesis. The polypeptide is Glycerol-3-phosphate dehydrogenase [NAD(P)+] (Dehalococcoides mccartyi (strain ATCC BAA-2100 / JCM 16839 / KCTC 5957 / BAV1)).